Reading from the N-terminus, the 611-residue chain is Immunoglobulin superfamily member 8 (611 aa).

An N-terminal signal peptide occupies residues 1–25 (MGVPSPTPLSSLLLLLLILGTRCYA). Ig-like C2-type domains lie at 26-143 (RQVH…AKVE), 160-284 (PRGR…WVQV), 301-422 (SQLA…EAAS), and 429-554 (PVHV…ADYS). The Extracellular segment spans residues 26-577 (RQVHVPRGPL…VYPYTHAVDT (552 aa)). An intrachain disulfide couples Cys47 to Cys125. 2 N-linked (GlcNAc...) asparagine glycosylation sites follow: Asn48 and Asn137. Cys184 and Cys268 are joined by a disulfide. Positions 272–274 (EWI) match the EWI motif motif. Cystine bridges form between Cys324-Cys404 and Cys460-Cys542. Asn325 carries N-linked (GlcNAc...) asparagine glycosylation. Position 516 is a phosphoserine (Ser516). Residues 578-598 (LFVPLLVGTGVALVTGASVLA) traverse the membrane as a helical segment. Residues 599–611 (TITCCFMKRMRKR) are Cytoplasmic-facing. S-palmitoyl cysteine attachment occurs at residues Cys602 and Cys603.

In terms of assembly, interacts directly with CD82 and CD9/tetraspanin-29. Also interacts with integrin alpha-3/beta-1 and integrin alpha-4/beta-1. Part of a complex composed of CD9, PTGFRN and CD81. Interacts with CD81/tetraspanin-28. Expressed in lymphocytes as well as in many tissues with higher expression in brain. Detected in all regions of the brain with weak expression in the pituitary. Expressed selectively by neurons but not by glial cells. Expressed in myoblasts (at protein level).

It is found in the cell membrane. Functionally, member of the immunoglobulin superfamily (IgSF) that links tetraspanin-enriched microdomains to the actin cytoskeleton and plays several important roles in innate and adaptive immunity. Acts as an inducible receptor of HSPA8 on dendritic cells to enhance the CCL21/SLC-dependent migration of activated mature dendritic cells while attenuating their antigen-specific stimulatory capacities. In complex with alpha-actinins ACTN1 and ACTN4, regulates actin dynamics in the immune synapse and subsequent T-cell activation. Inhibits the entry of several viruses such as hepatitis C Virus (HCV) or HIV-1. Mechanistically, promotes a change in CD81 organization at the plasma membrane by significantly restricting its diffusion which in turn influences CD81 interaction with Claudin-1/CLDN1, preventing CLDN1 from acting as a co-receptor required for HCV entry. Accumulates at the presynaptic terminal, the producer cell side of the virological synapse, to prevent HIV-1 Env-mediated cell-cell fusion. Highly expressed on malignant cells with antigen presentation defects, interacts with NK receptor KLRA9 to suppress NK-cell cytotoxicity. May participate in the regulation of neurite outgrowth and maintenance of the neural network in the adult brain. The chain is Immunoglobulin superfamily member 8 (Igsf8) from Mus musculus (Mouse).